We begin with the raw amino-acid sequence, 190 residues long: DNA dC-&gt;dU-editing enzyme APOBEC-3C (190 aa).

The CMP/dCMP-type deaminase domain maps to 29–138 (DRNETWLCFT…PCYQEGLRSL (110 aa)). Residues 40-86 (EGIKRRSVVSWKTGVFRNQVDSETHCHAERCFLSWFCDDILSPNTKY) form a (Microbial infection) Required for interaction with human foamy virus protein Bet region. H66 lines the Zn(2+) pocket. Residue E68 is the Proton donor of the active site. Residues C97 and C100 each contribute to the Zn(2+) site.

The protein belongs to the cytidine and deoxycytidylate deaminase family. As to quaternary structure, homodimer. Interacts with TRIB3. Interacts with AGO2. (Microbial infection) Interacts with human foamy virus protein Bet; this interaction does not induce APOBEC3C degradation but prevents its dimerization and incorporation into the virion by binding of Bet close to or within the APOBEC3C dimerization site. In terms of assembly, (Microbial infection) Interacts with HIV-1 Vif. The cofactor is Zn(2+). Expressed in spleen, testes, peripherical blood lymphocytes, heart, thymus, prostate and ovary.

Its subcellular location is the nucleus. It localises to the cytoplasm. The enzyme catalyses a 2'-deoxycytidine in single-stranded DNA + H2O + H(+) = a 2'-deoxyuridine in single-stranded DNA + NH4(+). Its activity is regulated as follows. (Microbial infection) Antiviral activity is neutralized by the HIV-1 virion infectivity factor (Vif), that prevents its incorporation into progeny HIV-1 virions by both inhibiting its translation and/or by inducing its ubiquitination and subsequent degradation by the 26S proteasome. Functionally, DNA deaminase (cytidine deaminase) which acts as an inhibitor of retrovirus replication and retrotransposon mobility via deaminase-dependent and -independent mechanisms. After the penetration of retroviral nucleocapsids into target cells of infection and the initiation of reverse transcription, it can induce the conversion of cytosine to uracil in the minus-sense single-strand viral DNA, leading to G-to-A hypermutations in the subsequent plus-strand viral DNA. The resultant detrimental levels of mutations in the proviral genome, along with a deamination-independent mechanism that works prior to the proviral integration, together exert efficient antiretroviral effects in infected target cells. Selectively targets single-stranded DNA and does not deaminate double-stranded DNA or single- or double-stranded RNA. Exhibits antiviral activity against simian immunodeficiency virus (SIV), hepatitis B virus (HBV), herpes simplex virus 1 (HHV-1) and Epstein-Barr virus (EBV) and may inhibit the mobility of LTR and non-LTR retrotransposons. May also play a role in the epigenetic regulation of gene expression through the process of active DNA demethylation. The polypeptide is DNA dC-&gt;dU-editing enzyme APOBEC-3C (APOBEC3C) (Homo sapiens (Human)).